Here is a 138-residue protein sequence, read N- to C-terminus: Small ribosomal subunit protein uS11c (138 aa).

The disordered stretch occupies residues 1–23 (MAKPIPRIGSRKNGRIGSRKSGR). Basic residues predominate over residues 9 to 23 (GSRKNGRIGSRKSGR).

This sequence belongs to the universal ribosomal protein uS11 family. In terms of assembly, part of the 30S ribosomal subunit.

The protein resides in the plastid. The protein localises to the chloroplast. This chain is Small ribosomal subunit protein uS11c, found in Buxus microphylla (Littleleaf boxwood).